The chain runs to 424 residues: Serine--tRNA ligase (424 aa).

Residue 233–235 (TAE) coordinates L-serine. 264-266 (RKE) is a binding site for ATP. Glu-287 contacts L-serine. Residue 351–354 (EISS) coordinates ATP. Residue Ser-386 coordinates L-serine.

It belongs to the class-II aminoacyl-tRNA synthetase family. Type-1 seryl-tRNA synthetase subfamily. As to quaternary structure, homodimer. The tRNA molecule binds across the dimer.

It localises to the cytoplasm. It carries out the reaction tRNA(Ser) + L-serine + ATP = L-seryl-tRNA(Ser) + AMP + diphosphate + H(+). The catalysed reaction is tRNA(Sec) + L-serine + ATP = L-seryl-tRNA(Sec) + AMP + diphosphate + H(+). It participates in aminoacyl-tRNA biosynthesis; selenocysteinyl-tRNA(Sec) biosynthesis; L-seryl-tRNA(Sec) from L-serine and tRNA(Sec): step 1/1. In terms of biological role, catalyzes the attachment of serine to tRNA(Ser). Is also able to aminoacylate tRNA(Sec) with serine, to form the misacylated tRNA L-seryl-tRNA(Sec), which will be further converted into selenocysteinyl-tRNA(Sec). The chain is Serine--tRNA ligase from Elusimicrobium minutum (strain Pei191).